The primary structure comprises 212 residues: MKNLTIGAIFLIFFAVSAFASAPCPKKLADTTCPREPYSFEGMKRQEPIKGRNVGWFQCQATMTVHDPVTTAVLVTQPTFTFNLSTLYHNSCGCWKTVTTIPGDAVKMEYGNGLPGQAMYGSCFYATWADLAGNPVETVGFARNVVGVHRDLIYVSRATNELVVHQSIYPLGRDQVGDEYVLVRHFDPVTKGIDWVQAVYCTKIQDQLEPLP.

The N-terminal stretch at 1-20 is a signal peptide; it reads MKNLTIGAIFLIFFAVSAFA.

The protein resides in the virion. This is an uncharacterized protein from Acanthamoeba polyphaga (Amoeba).